A 113-amino-acid chain; its full sequence is MNILDKVDSAYLRDDVPAFRPGDTLDVHVKVIEGTNTRTQLFKGVVIRRQGSGIRETFTVRKVSFGIGVERTFPVHSPNLEKIEVVRRGDVRRAKLYYLRELRGKAARIKEKR.

This sequence belongs to the bacterial ribosomal protein bL19 family.

Its function is as follows. This protein is located at the 30S-50S ribosomal subunit interface and may play a role in the structure and function of the aminoacyl-tRNA binding site. The protein is Large ribosomal subunit protein bL19 of Corynebacterium efficiens (strain DSM 44549 / YS-314 / AJ 12310 / JCM 11189 / NBRC 100395).